We begin with the raw amino-acid sequence, 36 residues long: Photosystem I reaction center subunit VIII (36 aa).

A helical transmembrane segment spans residues 6-28 (LPSIFVPXVGLVFPAIAMASXFL).

It belongs to the PsaI family.

It is found in the plastid. Its subcellular location is the chloroplast thylakoid membrane. May help in the organization of the PsaL subunit. This Acorus gramineus (Dwarf sweet flag) protein is Photosystem I reaction center subunit VIII.